The following is a 479-amino-acid chain: FAD-dependent monooxygenase cdmI (479 aa).

3 residues coordinate FAD: Glu43, Gly57, and Arg116. N-linked (GlcNAc...) asparagine glycosylation is found at Asn156 and Asn198. Positions 315 and 328 each coordinate FAD. The chain crosses the membrane as a helical span at residues 453–473; it reads PFILAVLAGLGFLLTMFKQQW.

It belongs to the paxM FAD-dependent monooxygenase family. FAD serves as cofactor.

The protein resides in the membrane. The enzyme catalyses verruculide C + AH2 + O2 = verruculide C epoxide + A + H2O. Its pathway is secondary metabolite biosynthesis; terpenoid biosynthesis. FAD-dependent monooxygenase; part of the gene cluster that mediates the biosynthesis of chrodrimanin B, a meroterpenoid that acts as a potent blocker of insect GABA-gated chloride channels. The first step of the pathway is the biosynthesis of 6-hydroxymellein by the polyketide synthase cdmE. The prenyltransferase cdmH acts as a 6-hydroxymellein 5-farnesyltransferase and produces the hydrophobic metabolite verruculide C. The FAD-dependent monooxygenase cdmI further converts verruculide C into verruculide B. The terpene cyclase cdmG then produced the pentacyclic molecule 3-hydroxypentacecilide A, the backbone structure of chrodrimanin B, via folding the farnesyl moiety of the substrate into the chair-boat conformation. The short-chain dehydrogenase/reductase cdmF functions as the 3-OH dehydrogenase that oxidizes the C-3 hydroxyl group of 3-hydroxypentacecilide A and produces chrodrimanin C, the dehydrogenated product of 3-hydroxypentacecilide A. The cytochrome P450 monooxygenase cdmJ then accepts both 3-hydroxypentacecilide A and chrodrimanin C and functions as a C-7-beta-hydroxylase to produce respectively chrodrimanin H and chrodrimanin F. The dioxygenase cdmA accepts chrodrimanin H to afford chrodrimanin E, which is further transformed to chrodrimanin A by the dioxygenase cdmD. CdmA can also accept chrodrimanin C as substrate to convert it into verruculide A, which is further converted into chrodrimanin T by cdmD. The last step of the biosynthesis is proposed to be performed by the acetyltransferase cdmC which acetylates chrodrimanin A to yield chrodrimanin B. The pathway may also lead to the production of additional shunt products, including chrodrimanins T and U. In Talaromyces verruculosus (Penicillium verruculosum), this protein is FAD-dependent monooxygenase cdmI.